A 624-amino-acid polypeptide reads, in one-letter code: Chaperone protein DnaK (624 aa).

At Thr-174 the chain carries Phosphothreonine; by autocatalysis. 2 disordered regions span residues 544-563 (KKAQ…DDLS) and 576-624 (NAQK…DDKK). The segment covering 581-600 (QQAQGGPASGAATDAGAAQG) has biased composition (low complexity). Positions 601 to 624 (SDDKKSDDDTINGDYKDVSDDDKK) are enriched in basic and acidic residues.

The protein belongs to the heat shock protein 70 family.

In terms of biological role, acts as a chaperone. This Lacticaseibacillus casei (strain BL23) (Lactobacillus casei) protein is Chaperone protein DnaK.